Consider the following 341-residue polypeptide: HMG box-containing protein C10F6.08c (341 aa).

The span at 68–77 (SEAKSREFGQ) shows a compositional bias: basic and acidic residues. Disordered stretches follow at residues 68-195 (SEAK…SNAK) and 236-341 (LTEE…SSNA). 2 stretches are compositionally biased toward polar residues: residues 116 to 157 (DTNV…QVVQ) and 165 to 177 (NTDPIPSPIITNL). The segment covering 178-195 (KTESSKSSGAKKATSNAK) has biased composition (low complexity). Positions 195–263 (KITDTMLFNH…KAREARRRRS (69 aa)) form a DNA-binding region, HMG box. 2 stretches are compositionally biased toward basic and acidic residues: residues 238 to 256 (EEEKKPYHEGLLAAREKAR) and 269 to 304 (KLEKEKAKEKQKDKDQEQDTVSDKNQIDEIEKGQKE). A phosphothreonine mark is found at T314 and T315. Position 316 is a phosphoserine (S316).

The protein resides in the nucleus. This Schizosaccharomyces pombe (strain 972 / ATCC 24843) (Fission yeast) protein is HMG box-containing protein C10F6.08c.